An 811-amino-acid polypeptide reads, in one-letter code: Potassium transporter 27 (811 aa).

The Cytoplasmic segment spans residues 1–64 (MGDDVLGRGS…QEESWARTLK (64 aa)). A helical membrane pass occupies residues 65-85 (LAFQCVGILYGDIGTSPLFVY). Topologically, residues 86-102 (SSTFKDGVRHPDDLLGA) are extracellular. The chain crosses the membrane as a helical span at residues 103–123 (LSLIIYSFALFTIVKYVFIAL). The Cytoplasmic portion of the chain corresponds to 124 to 188 (RANDDGDGGT…ELLETNRAVK (65 aa)). Residues 189 to 209 (IWLFLLTILATAMVISDAVLT) form a helical membrane-spanning segment. Residues 210–226 (PAISVLSAVGGLKEKAP) lie on the Extracellular side of the membrane. The helical transmembrane segment at 227–247 (NLTTDEIVWITVATLVVLFAI) threads the bilayer. The Cytoplasmic segment spans residues 248–254 (QRFGTDK). The helical transmembrane segment at 255-275 (IGYLFAPIILLWLLLIGCVGI) threads the bilayer. Over 276 to 310 (YNTIKFDTGVLRAFNLKYIIDYFRRNKKDGWISLS) the chain is Extracellular. Residues 311-331 (GILLCFTGTEALFSDLGYFSI) form a helical membrane-spanning segment. Over 332 to 335 (RSIQ) the chain is Cytoplasmic. Residues 336–356 (LSFSFGLVPSVLLAYIGQAAY) traverse the membrane as a helical segment. Residues 357 to 375 (LREHPEHIANTFYRSTPNV) lie on the Extracellular side of the membrane. A helical membrane pass occupies residues 376-396 (MFWPTFILAVAASIIGSQAMI). The Cytoplasmic portion of the chain corresponds to 397–434 (SCAFATISHLQTLNCFPRVKILHTSRQYSGQLYIPEVN). Residues 435 to 455 (FLLCVGACLVTIGFKTTVIIG) traverse the membrane as a helical segment. Residues 456–459 (EAHA) lie on the Extracellular side of the membrane. A helical membrane pass occupies residues 460-480 (ICVVFVMIITTLLLTIVMLLV). Over 481 to 482 (WK) the chain is Cytoplasmic. The helical transmembrane segment at 483 to 503 (VSIWYVALFFIVFMSSESIYL) threads the bilayer. Residues 504-515 (SAVLYQFVHGEY) lie on the Extracellular side of the membrane. A helical transmembrane segment spans residues 516 to 536 (VPVAMSVFLMIVMTVWHYVHV). At 537-811 (KRYEFELEHT…VLKVGIAYEI (275 aa)) the chain is on the cytoplasmic side.

Belongs to the HAK/KUP transporter (TC 2.A.72.3) family.

It is found in the membrane. Functionally, high-affinity potassium transporter. In Oryza sativa subsp. japonica (Rice), this protein is Potassium transporter 27 (HAK27).